The primary structure comprises 1109 residues: DNA-directed RNA polymerase subunit beta (1109 aa).

Belongs to the RNA polymerase beta chain family. In plastids the minimal PEP RNA polymerase catalytic core is composed of four subunits: alpha, beta, beta', and beta''. When a (nuclear-encoded) sigma factor is associated with the core the holoenzyme is formed, which can initiate transcription.

Its subcellular location is the plastid. The protein localises to the chloroplast. The catalysed reaction is RNA(n) + a ribonucleoside 5'-triphosphate = RNA(n+1) + diphosphate. Functionally, DNA-dependent RNA polymerase catalyzes the transcription of DNA into RNA using the four ribonucleoside triphosphates as substrates. In Nephroselmis olivacea (Green alga), this protein is DNA-directed RNA polymerase subunit beta.